Reading from the N-terminus, the 463-residue chain is Aromatic amino acid transport protein AroP (463 aa).

A run of 12 helical transmembrane segments spans residues 18-38 (TMMGLGSAIGAGLFLGTGVGI), 40-60 (AAGPAVLLAYIIAGAIVVLVM), 84-104 (FGHWAGFSLGWLYWFMLIMVM), 117-137 (AWFGVEPWIPSLVCVVFFAVV), 157-177 (VAVIIAFLIIGIALIFGWLPG), 200-220 (VAAGLLAVAFAFGGIEIVTIA), 237-257 (AVIWRISVFYLGSVLVITFLM), 276-296 (ILAMANIPGTVGFMEAIIVLA), 337-357 (AVLLSMFFAFVSVGLQYWNPA), 358-378 (GLLDFLLNAVGGCLIVVWAMI), 402-422 (AHPWLGILTLVLLAGLVALML), and 431-451 (VYSVAIVYGFLVLLSFVTVNS).

This sequence belongs to the amino acid-polyamine-organocation (APC) superfamily. Amino acid transporter (AAT) (TC 2.A.3.1) family.

The protein localises to the cell membrane. The catalysed reaction is L-phenylalanine(in) + H(+)(in) = L-phenylalanine(out) + H(+)(out). The enzyme catalyses L-tryptophan(in) + H(+)(in) = L-tryptophan(out) + H(+)(out). It carries out the reaction L-tyrosine(in) + H(+)(in) = L-tyrosine(out) + H(+)(out). Its function is as follows. Permease that is involved in the active transport across the cytoplasmic membrane of all three aromatic amino acids, phenylalanine, tyrosine and tryptophan. This Corynebacterium glutamicum (strain ATCC 13032 / DSM 20300 / JCM 1318 / BCRC 11384 / CCUG 27702 / LMG 3730 / NBRC 12168 / NCIMB 10025 / NRRL B-2784 / 534) protein is Aromatic amino acid transport protein AroP.